A 555-amino-acid polypeptide reads, in one-letter code: Formate--tetrahydrofolate ligase (555 aa).

65 to 72 contacts ATP; it reads TPAGEGKT.

This sequence belongs to the formate--tetrahydrofolate ligase family.

The enzyme catalyses (6S)-5,6,7,8-tetrahydrofolate + formate + ATP = (6R)-10-formyltetrahydrofolate + ADP + phosphate. It functions in the pathway one-carbon metabolism; tetrahydrofolate interconversion. This Thermoanaerobacter sp. (strain X514) protein is Formate--tetrahydrofolate ligase.